The sequence spans 460 residues: TNF receptor-associated factor family protein DDB_G0290883 (460 aa).

The RING-type; degenerate zinc-finger motif lies at 27-67 (CPICFEFIYKKQIYQCKSGHHACKECWEKSLETKKECMTCK). 2 consecutive TRAF-type zinc fingers follow at residues 141–194 (SHLI…KKEL) and 196–253 (THYK…SELQ). Positions 320–448 (GYRNKWIISN…DDKLTIEIYI (129 aa)) constitute an MATH domain.

The protein belongs to the TNF receptor-associated factor family. A subfamily.

It is found in the cytoplasm. In terms of biological role, probable adapter protein and signal transducer that links members of the tumor necrosis factor receptor family to different signaling pathways by association with the receptor cytoplasmic domain and kinases. This is TNF receptor-associated factor family protein DDB_G0290883 from Dictyostelium discoideum (Social amoeba).